The chain runs to 508 residues: Chromosomal replication initiator protein DnaA (508 aa).

Positions 1-90 (MSVELWQQCV…RRSSAPRAAP (90 aa)) are domain I, interacts with DnaA modulators. Residues 91-171 (NAPVSAAVAA…QVEGALKHTS (81 aa)) form a domain II region. The segment at 130–160 (EVEEPSSRDSFDSMSDSGSVPAASGRTEQRT) is disordered. A domain III, AAA+ region region spans residues 172 to 388 (YLNRTFTFET…GALKRVIAHS (217 aa)). ATP-binding residues include Gly216, Gly218, Lys219, and Thr220. The segment at 389–508 (HFMGRDITIE…YKNLLRTLTT (120 aa)) is domain IV, binds dsDNA.

It belongs to the DnaA family. As to quaternary structure, oligomerizes as a right-handed, spiral filament on DNA at oriC.

The protein localises to the cytoplasm. Functionally, plays an essential role in the initiation and regulation of chromosomal replication. ATP-DnaA binds to the origin of replication (oriC) to initiate formation of the DNA replication initiation complex once per cell cycle. Binds the DnaA box (a 9 base pair repeat at the origin) and separates the double-stranded (ds)DNA. Forms a right-handed helical filament on oriC DNA; dsDNA binds to the exterior of the filament while single-stranded (ss)DNA is stabiized in the filament's interior. The ATP-DnaA-oriC complex binds and stabilizes one strand of the AT-rich DNA unwinding element (DUE), permitting loading of DNA polymerase. After initiation quickly degrades to an ADP-DnaA complex that is not apt for DNA replication. Binds acidic phospholipids. The protein is Chromosomal replication initiator protein DnaA of Pseudomonas entomophila (strain L48).